Reading from the N-terminus, the 1025-residue chain is Leucyl-cystinyl aminopeptidase (1025 aa).

Residue Met-1 is modified to N-acetylmethionine. Over 1–109 the chain is Cytoplasmic; it reads MESFTNDRLQ…DGTCSLPSAR (109 aa). The Dileucine internalization motif motif lies at 53–54; the sequence is LL. A Phosphotyrosine modification is found at Tyr-70. The Dileucine internalization motif signature appears at 76-77; sequence LL. 2 positions are modified to phosphoserine: Ser-80 and Ser-91. The tract at residues 96–101 is tankyrase binding; it reads RQSPDG. The chain crosses the membrane as a helical; Signal-anchor for type II membrane protein span at residues 110-131; the sequence is TLVICVFVIVVAVSVIMVIYLL. Residues 132–1025 are Extracellular-facing; it reads PRCTFTKEGC…RNLKTLSQWL (894 aa). N-linked (GlcNAc...) asparagine glycans are attached at residues Asn-145, Asn-184, Asn-215, Asn-256, and Asn-266. Glu-295 lines the substrate pocket. Asn-368 and Asn-374 each carry an N-linked (GlcNAc...) asparagine glycan. Substrate is bound at residue 428-432; it reads GAMEN. A glycan (N-linked (GlcNAc...) asparagine) is linked at Asn-447. Residue His-464 participates in Zn(2+) binding. Residue Glu-465 is the Proton acceptor of the active site. 2 residues coordinate Zn(2+): His-468 and Glu-487. N-linked (GlcNAc...) asparagine glycosylation is found at Asn-525, Asn-578, Asn-664, Asn-682, Asn-695, Asn-758, Asn-834, Asn-850, and Asn-989.

The protein belongs to the peptidase M1 family. As to quaternary structure, homodimer. Binds tankyrases 1 and 2. It depends on Zn(2+) as a cofactor.

The protein localises to the cell membrane. It is found in the endomembrane system. It catalyses the reaction Release of an N-terminal amino acid, Cys-|-Xaa-, in which the half-cystine residue is involved in a disulfide loop, notably in oxytocin or vasopressin. Hydrolysis rates on a range of aminoacyl arylamides exceed that for the cystinyl derivative, however.. In terms of biological role, release of an N-terminal amino acid, cleave before cysteine, leucine as well as other amino acids. Degrades peptide hormones such as oxytocin, vasopressin and angiotensin III, and plays a role in maintaining homeostasis during pregnancy. May be involved in the inactivation of neuronal peptides in the brain. Cleaves Met-enkephalin and dynorphin. Binds angiotensin IV and may be the angiotensin IV receptor in the brain. The protein is Leucyl-cystinyl aminopeptidase (Lnpep) of Mus musculus (Mouse).